Consider the following 612-residue polypeptide: Threonine--tRNA ligase (612 aa).

Positions 218 to 509 (DHRKLGVELG…LSEHFWGNFP (292 aa)) are catalytic. Positions 310, 361, and 486 each coordinate Zn(2+).

Belongs to the class-II aminoacyl-tRNA synthetase family. In terms of assembly, homodimer. Requires Zn(2+) as cofactor.

The protein localises to the cytoplasm. The catalysed reaction is tRNA(Thr) + L-threonine + ATP = L-threonyl-tRNA(Thr) + AMP + diphosphate + H(+). Its function is as follows. Catalyzes the attachment of threonine to tRNA(Thr) in a two-step reaction: L-threonine is first activated by ATP to form Thr-AMP and then transferred to the acceptor end of tRNA(Thr). Also edits incorrectly charged L-seryl-tRNA(Thr). In Helicobacter acinonychis (strain Sheeba), this protein is Threonine--tRNA ligase.